Reading from the N-terminus, the 339-residue chain is 5-dehydro-2-deoxygluconokinase (339 aa).

Belongs to the carbohydrate kinase PfkB family.

The enzyme catalyses 5-dehydro-2-deoxy-D-gluconate + ATP = 6-phospho-5-dehydro-2-deoxy-D-gluconate + ADP + H(+). It participates in polyol metabolism; myo-inositol degradation into acetyl-CoA; acetyl-CoA from myo-inositol: step 5/7. Functionally, catalyzes the phosphorylation of 5-dehydro-2-deoxy-D-gluconate (2-deoxy-5-keto-D-gluconate or DKG) to 6-phospho-5-dehydro-2-deoxy-D-gluconate (DKGP). This is 5-dehydro-2-deoxygluconokinase from Clostridium botulinum (strain Eklund 17B / Type B).